A 264-amino-acid chain; its full sequence is uncharacterized protein (264 aa).

8 to 15 lines the ATP pocket; that stretch reads IQGGTGKT.

This is an uncharacterized protein from Methanocaldococcus jannaschii (strain ATCC 43067 / DSM 2661 / JAL-1 / JCM 10045 / NBRC 100440) (Methanococcus jannaschii).